A 359-amino-acid polypeptide reads, in one-letter code: NADPH HC-toxin reductase 2 (359 aa).

Residues R39, 67–68, 87–89, Y177, K181, 206–209, and T221 contribute to the NADP(+) site; these read DL, VAT, and LGLV. K181 serves as the catalytic Proton donor.

This sequence belongs to the NAD(P)-dependent epimerase/dehydratase family.

Functionally, in tandem with Hm1, NADPH-dependent HC toxin reductase (HCTR), which inactivates HC toxin, a cyclic tetrapeptide produced by the fungus Cochliobolus carbonum to permit infection and acting as an inhibitor of host histone deacetylases (HDACs), thus conferring resistance against C.carbonum race 1 in resistant cultivars (e.g. cv. B73 and cv. Wisconsin 22). Catalyzes the production of 8-hydroxy derivative of HC-toxin via the reduction of the 8-keto group of 2-amino-9,10-epoxy-8-oxo-decanoic acid, an amino acid of the HC-toxin. The sequence is that of NADPH HC-toxin reductase 2 from Zea mays (Maize).